The primary structure comprises 324 residues: Antihemorrhagic factor cMSF (324 aa).

Positions 1–19 are cleaved as a signal peptide; sequence MHFLVALVLLGQIIGSTLS. Cystatin fetuin-A-type domains are found at residues 22–130 and 141–254; these read VRGD…VKCH and RNCL…SDCV. A Cell attachment site motif is present at residues 23–25; sequence RGD. Intrachain disulfides connect cysteine 28/cysteine 315, cysteine 85/cysteine 96, cysteine 110/cysteine 129, cysteine 143/cysteine 146, cysteine 205/cysteine 217, cysteine 230/cysteine 253, and cysteine 287/cysteine 291. N-linked (GlcNAc...) asparagine glycosylation is present at asparagine 204. Asparagine 282 is a glycosylation site (N-linked (GlcNAc...) asparagine).

Homodimer. Expressed by the liver.

Its subcellular location is the secreted. Suppress hemorrhage induced by metalloproteinases from the same venom (brevilysin-H3, -H4, -H6) and from habu venom (metalloproteinases HR1A and HR1B). The non-hemorrhagic brevilysin-L4 is not inhibited by cMSF. Does not inhibit serine and cysteine proteases such as trypsin, chymotrypsin, thermolysin, and papain. The inhibition may occur by formation of a non-covalent complex between this protein and the proteinases at their metalloproteinase domains. This is Antihemorrhagic factor cMSF from Gloydius brevicauda (Korean slamosa snake).